Reading from the N-terminus, the 311-residue chain is tRNA-cytidine(32) 2-sulfurtransferase (311 aa).

Residues S47–S52 carry the PP-loop motif motif. C122, C125, and C213 together coordinate [4Fe-4S] cluster.

Belongs to the TtcA family. As to quaternary structure, homodimer. The cofactor is Mg(2+). Requires [4Fe-4S] cluster as cofactor.

The protein localises to the cytoplasm. It carries out the reaction cytidine(32) in tRNA + S-sulfanyl-L-cysteinyl-[cysteine desulfurase] + AH2 + ATP = 2-thiocytidine(32) in tRNA + L-cysteinyl-[cysteine desulfurase] + A + AMP + diphosphate + H(+). The protein operates within tRNA modification. Functionally, catalyzes the ATP-dependent 2-thiolation of cytidine in position 32 of tRNA, to form 2-thiocytidine (s(2)C32). The sulfur atoms are provided by the cysteine/cysteine desulfurase (IscS) system. The polypeptide is tRNA-cytidine(32) 2-sulfurtransferase (Enterobacter sp. (strain 638)).